The primary structure comprises 118 residues: Small ribosomal subunit protein uS13 (118 aa).

The tract at residues 94 to 118 is disordered; it reads GLPVRGQRTRTNARTRKGPRKAIKK.

This sequence belongs to the universal ribosomal protein uS13 family. Part of the 30S ribosomal subunit. Forms a loose heterodimer with protein S19. Forms two bridges to the 50S subunit in the 70S ribosome.

Its function is as follows. Located at the top of the head of the 30S subunit, it contacts several helices of the 16S rRNA. In the 70S ribosome it contacts the 23S rRNA (bridge B1a) and protein L5 of the 50S subunit (bridge B1b), connecting the 2 subunits; these bridges are implicated in subunit movement. Contacts the tRNAs in the A and P-sites. The chain is Small ribosomal subunit protein uS13 from Thiobacillus denitrificans (strain ATCC 25259 / T1).